We begin with the raw amino-acid sequence, 93 residues long: Small ribosomal subunit protein bS20c (93 aa).

This sequence belongs to the bacterial ribosomal protein bS20 family.

Its subcellular location is the plastid. The protein resides in the chloroplast. Functionally, binds directly to 16S ribosomal RNA. This Phaeodactylum tricornutum (strain CCAP 1055/1) protein is Small ribosomal subunit protein bS20c.